A 102-amino-acid chain; its full sequence is Small ribosomal subunit protein uS10 (102 aa).

This sequence belongs to the universal ribosomal protein uS10 family. As to quaternary structure, part of the 30S ribosomal subunit.

Functionally, involved in the binding of tRNA to the ribosomes. The polypeptide is Small ribosomal subunit protein uS10 (Staphylococcus aureus (strain JH9)).